Here is a 317-residue protein sequence, read N- to C-terminus: Peroxidase 64 (317 aa).

A signal peptide spans M1–A22. Cystine bridges form between C32-C111, C65-C70, C117-C313, and C195-C227. Residue H63 is the Proton acceptor of the active site. Ca(2+)-binding residues include D64, V67, G69, D71, and S73. P158 is a substrate binding site. N163 carries N-linked (GlcNAc...) asparagine glycosylation. H188 lines the heme b pocket. T189 serves as a coordination point for Ca(2+). Positions 241, 243, and 248 each coordinate Ca(2+).

Belongs to the peroxidase family. Classical plant (class III) peroxidase subfamily. Heme b is required as a cofactor. The cofactor is Ca(2+). As to expression, expressed in the whole plant, but preferentially in roots.

The protein resides in the secreted. It catalyses the reaction 2 a phenolic donor + H2O2 = 2 a phenolic radical donor + 2 H2O. Removal of H(2)O(2), oxidation of toxic reductants, biosynthesis and degradation of lignin, suberization, auxin catabolism, response to environmental stresses such as wounding, pathogen attack and oxidative stress. These functions might be dependent on each isozyme/isoform in each plant tissue. The sequence is that of Peroxidase 64 (PER64) from Arabidopsis thaliana (Mouse-ear cress).